Consider the following 269-residue polypeptide: Glutamate racemase (269 aa).

Residues 11 to 12 (DS) and 43 to 44 (YG) contribute to the substrate site. Catalysis depends on Cys-74, which acts as the Proton donor/acceptor. 75–76 (NT) is a substrate binding site. Cys-185 (proton donor/acceptor) is an active-site residue. A substrate-binding site is contributed by 186 to 187 (TH).

It belongs to the aspartate/glutamate racemases family.

It catalyses the reaction L-glutamate = D-glutamate. It functions in the pathway cell wall biogenesis; peptidoglycan biosynthesis. Its function is as follows. Provides the (R)-glutamate required for cell wall biosynthesis. This chain is Glutamate racemase, found in Bacillus cereus (strain ATCC 10987 / NRS 248).